The primary structure comprises 395 residues: Beta-1,4-galactosyltransferase 3 (395 aa).

Residues 1 to 10 (MLRRLLERPC) lie on the Cytoplasmic side of the membrane. A helical; Signal-anchor for type II membrane protein transmembrane segment spans residues 11–31 (TLALLVGSQLAVMMYLSLGGF). The Lumenal segment spans residues 32-395 (RSLSALFGRD…ANHTAPHGSH (364 aa)). The N-linked (GlcNAc...) asparagine glycan is linked to asparagine 57. Cysteine 79 and cysteine 121 are disulfide-bonded. Position 132 to 136 (132 to 136 (PHRAR)) interacts with UDP-alpha-D-galactose. The N-linked (GlcNAc...) asparagine glycan is linked to asparagine 168. Residues 171–173 (FNR), 198–199 (VD), tyrosine 228, and tryptophan 260 each bind UDP-alpha-D-galactose. A disulfide bridge links cysteine 192 with cysteine 211. Aspartate 199 contacts Mn(2+). Position 262–265 (262–265 (GEDD)) interacts with N-acetyl-D-glucosamine. Histidine 293 is a Mn(2+) binding site. 293 to 295 (HRG) provides a ligand contact to UDP-alpha-D-galactose. Arginine 305 is an N-acetyl-D-glucosamine binding site. N-linked (GlcNAc...) asparagine glycans are attached at residues asparagine 339 and asparagine 387. Positions 341–395 (TADIGTDPRGPRAPSGPRYPPGSSQAFRQEMLQRRPPARPGPLPTANHTAPHGSH) are disordered.

Belongs to the glycosyltransferase 7 family. Mn(2+) serves as cofactor.

It localises to the golgi apparatus. It is found in the golgi stack membrane. The catalysed reaction is an N-acetyl-beta-D-glucosaminyl derivative + UDP-alpha-D-galactose = a beta-D-galactosyl-(1-&gt;4)-N-acetyl-beta-D-glucosaminyl derivative + UDP + H(+). It catalyses the reaction N-acetyl-D-glucosamine + UDP-alpha-D-galactose = beta-D-galactosyl-(1-&gt;4)-N-acetyl-D-glucosamine + UDP + H(+). The enzyme catalyses a beta-D-GlcNAc-(1-&gt;3)-beta-D-Gal-(1-&gt;4)-beta-D-Glc-(1&lt;-&gt;1)-Cer(d18:1(4E)) + UDP-alpha-D-galactose = a neolactoside nLc4Cer(d18:1(4E)) + UDP + H(+). It carries out the reaction a beta-D-glucosylceramide + UDP-alpha-D-galactose = a beta-D-galactosyl-(1-&gt;4)-beta-D-glucosyl-(1&lt;-&gt;1)-ceramide + UDP + H(+). The catalysed reaction is a neolactoside IV(3)-beta-GlcNAc-nLc4Cer + UDP-alpha-D-galactose = a neolactoside nLc6Cer + UDP + H(+). It participates in protein modification; protein glycosylation. Responsible for the synthesis of complex-type N-linked oligosaccharides in many glycoproteins as well as the carbohydrate moieties of glycolipids. This chain is Beta-1,4-galactosyltransferase 3, found in Rattus norvegicus (Rat).